A 347-amino-acid polypeptide reads, in one-letter code: Guanine nucleotide-binding protein alpha-5 subunit (347 aa).

Gly2 is lipidated: N-myristoyl glycine. Cys3 carries the S-palmitoyl cysteine lipid modification. Residues 27–347 (NETKLLLLGP…KNIFNTIINY (321 aa)) enclose the G-alpha domain. Residues 30 to 43 (KLLLLGPGESGKST) are G1 motif. GTP is bound by residues 35 to 42 (GPGESGKS), 170 to 176 (LRSRVRT), 195 to 199 (DVGGQ), 264 to 267 (NKVD), and Ala319. Positions 42 and 176 each coordinate Mg(2+). The segment at 168-176 (DVLRSRVRT) is G2 motif. A G3 motif region spans residues 191–200 (FRMLDVGGQR). The tract at residues 260 to 267 (IIFFNKVD) is G4 motif. The tract at residues 317 to 322 (TCAIDT) is G5 motif.

Belongs to the G-alpha family. G(q) subfamily. In terms of assembly, g proteins are composed of 3 units; alpha, beta and gamma. The alpha chain contains the guanine nucleotide binding site.

Its function is as follows. Guanine nucleotide-binding proteins (G proteins) are involved as modulators or transducers in various transmembrane signaling systems. This chain is Guanine nucleotide-binding protein alpha-5 subunit (gpaE), found in Dictyostelium discoideum (Social amoeba).